The following is a 172-amino-acid chain: Adenine phosphoribosyltransferase (172 aa).

This sequence belongs to the purine/pyrimidine phosphoribosyltransferase family. In terms of assembly, homodimer.

The protein resides in the cytoplasm. It catalyses the reaction AMP + diphosphate = 5-phospho-alpha-D-ribose 1-diphosphate + adenine. It participates in purine metabolism; AMP biosynthesis via salvage pathway; AMP from adenine: step 1/1. Functionally, catalyzes a salvage reaction resulting in the formation of AMP, that is energically less costly than de novo synthesis. This is Adenine phosphoribosyltransferase from Malacoplasma penetrans (strain HF-2) (Mycoplasma penetrans).